We begin with the raw amino-acid sequence, 444 residues long: Ribulose bisphosphate carboxylase (444 aa).

The active-site Proton acceptor is Lys-163. A substrate-binding site is contributed by Lys-165. The Mg(2+) site is built by Lys-189, Asp-191, and Glu-192. At Lys-189 the chain carries N6-carboxylysine. The active-site Proton acceptor is the His-281. Residues Arg-282, His-314, 367–369 (SGG), and 389–392 (QLGG) contribute to the substrate site.

It belongs to the RuBisCO large chain family. Type III subfamily. As to quaternary structure, homodecamer, consisting of five dimer units which form a ring-like pentagonal structure. This arrangement is essential for its high thermostability. In contrast to form I RuBisCO, the form III RuBisCO is composed solely of large subunits. The cofactor is Mg(2+).

The catalysed reaction is 2 (2R)-3-phosphoglycerate + 2 H(+) = D-ribulose 1,5-bisphosphate + CO2 + H2O. The enzyme catalyses D-ribulose 1,5-bisphosphate + O2 = 2-phosphoglycolate + (2R)-3-phosphoglycerate + 2 H(+). Catalyzes the addition of molecular CO(2) and H(2)O to ribulose 1,5-bisphosphate (RuBP), generating two molecules of 3-phosphoglycerate (3-PGA). Functions in an archaeal AMP degradation pathway, together with AMP phosphorylase and R15P isomerase. The sequence is that of Ribulose bisphosphate carboxylase from Thermococcus kodakarensis (strain ATCC BAA-918 / JCM 12380 / KOD1) (Pyrococcus kodakaraensis (strain KOD1)).